The chain runs to 223 residues: Ribonuclease HII (223 aa).

Positions 1 to 219 constitute an RNase H type-2 domain; it reads MMIAGIDEAG…VENIREELEK (219 aa). Residues Asp-7, Glu-8, and Asp-105 each coordinate a divalent metal cation.

It belongs to the RNase HII family. The cofactor is Mn(2+). Mg(2+) is required as a cofactor.

The protein resides in the cytoplasm. The catalysed reaction is Endonucleolytic cleavage to 5'-phosphomonoester.. Endonuclease that specifically degrades the RNA of RNA-DNA hybrids. This Methanosarcina acetivorans (strain ATCC 35395 / DSM 2834 / JCM 12185 / C2A) protein is Ribonuclease HII.